The sequence spans 632 residues: MFYPEHFDVIVIGGGHAGTEAAMAAARMGRQTLLLTHNIDTLGQMSCNPAIGGIGKGHLVKEIDAMGGLMATAIDHAGIQFRTLNASKGPAVRATRAQADRVLYRQAIRTTLENQPNLMIFQQPVEDLIVENDQVTGAVTRMGLKFRAKAVVLTVGTFLDGKIHIGLENYSGGRAGDPPSVSLSHRLRELPLRVGRLKTGTPPRIDARTIDFSQLAPQLGDNPMPVFSFLGNVDQHPEQMPCHITHTNEQTHEIIRNNLERSPMYAGVIEGIGPRYCPSIEDKVMRFADRNSHQIFLEPEGLTSNEIYPNGISTSLPFDVQMQIVNSMKGMENAKIIRPGYAIEYDFFDPRDLKQTLESKFINGLFFAGQINGTTGYEEAAAQGLLAGLNAARYAFDQEGWFPRRDQAYIGVLVDDLCTLGTKEPYRMFTSRAEYRLMLREDNADLRLTEIGRELGMVDDNRWAQFSEKVELVEKERQRLRDIWVHPKADNLEEINQLLKTPLSKEANGEDLLRRPEMTYEILKKIPRFAPGIDDSRPQAAEQVEIQVKYEGYINRQQEEIEKQLRNESAALPIDIDYKQVSGLSNEVIAKLNDHKPTSIGQASRISGVTPAAISILLVWLKKQGLLRRSAS.

Residues 13–18, Val125, and Ser180 contribute to the FAD site; that span reads GGGHAG. 273–287 contacts NAD(+); sequence GPRYCPSIEDKVMRF. Residue Gln370 coordinates FAD.

Belongs to the MnmG family. Homodimer. Heterotetramer of two MnmE and two MnmG subunits. It depends on FAD as a cofactor.

It localises to the cytoplasm. Functionally, NAD-binding protein involved in the addition of a carboxymethylaminomethyl (cmnm) group at the wobble position (U34) of certain tRNAs, forming tRNA-cmnm(5)s(2)U34. The polypeptide is tRNA uridine 5-carboxymethylaminomethyl modification enzyme MnmG (Proteus mirabilis (strain HI4320)).